Here is a 215-residue protein sequence, read N- to C-terminus: Pyrrolidone-carboxylate peptidase (215 aa).

Catalysis depends on residues Glu78, Cys141, and His165.

It belongs to the peptidase C15 family. As to quaternary structure, homotetramer.

Its subcellular location is the cytoplasm. The catalysed reaction is Release of an N-terminal pyroglutamyl group from a polypeptide, the second amino acid generally not being Pro.. In terms of biological role, removes 5-oxoproline from various penultimate amino acid residues except L-proline. In Streptococcus pyogenes serotype M18 (strain MGAS8232), this protein is Pyrrolidone-carboxylate peptidase.